Here is an 83-residue protein sequence, read N- to C-terminus: Large ribosomal subunit protein bL28 (83 aa).

It belongs to the bacterial ribosomal protein bL28 family.

The polypeptide is Large ribosomal subunit protein bL28 (Amoebophilus asiaticus (strain 5a2)).